The following is a 113-amino-acid chain: C-C motif chemokine 15 (113 aa).

An N-terminal signal peptide occupies residues 1–21 (MKVSVAALSCLMLVAVLGSQA). Disulfide bonds link cysteine 53–cysteine 77, cysteine 54–cysteine 93, and cysteine 64–cysteine 104.

This sequence belongs to the intercrine beta (chemokine CC) family. As to quaternary structure, monomer. Post-translationally, the N-terminal is proteolytically cleaved by proteases associated with inflammatory responses. The processed forms CCL15(22-92), CCL15(25-92) and CCL15(29-92) exhibit increase in CCR1-mediated signaling and chemotaxis assays in vitro. Most abundant in heart, skeletal muscle and adrenal gland. Lower levels in placenta, liver, pancreas and bone marrow. CCL15(22-92), CCL15(25-92) and CCL15(29-92) are found in high levels in synovial fluids from rheumatoid patients.

Its subcellular location is the secreted. In terms of biological role, chemotactic factor that attracts T-cells and monocytes, but not neutrophils, eosinophils, or B-cells. Acts mainly via CC chemokine receptor CCR1. Also binds to CCR3. CCL15(22-92), CCL15(25-92) and CCL15(29-92) are more potent chemoattractants than the CCL15. This Homo sapiens (Human) protein is C-C motif chemokine 15 (CCL15).